The chain runs to 336 residues: Probable deoxyhypusine synthase (336 aa).

Catalysis depends on Lys308, which acts as the Nucleophile.

This sequence belongs to the deoxyhypusine synthase family. It depends on NAD(+) as a cofactor.

The catalysed reaction is [eIF5A protein]-L-lysine + spermidine = [eIF5A protein]-deoxyhypusine + propane-1,3-diamine. Its pathway is protein modification; eIF5A hypusination. Its function is as follows. Catalyzes the NAD-dependent oxidative cleavage of spermidine and the subsequent transfer of the butylamine moiety of spermidine to the epsilon-amino group of a specific lysine residue of the eIF-5A precursor protein to form the intermediate deoxyhypusine residue. This is Probable deoxyhypusine synthase from Thermococcus gammatolerans (strain DSM 15229 / JCM 11827 / EJ3).